The sequence spans 58 residues: Small ribosomal subunit protein eS30 (58 aa).

Residues 1-58 (MGKVHGSLARAGKVKNQTPKVPKLDKKKRLTGRAKKRQLYNRRFSDNGGRKKGPNSKA) form a disordered region. Residues 25 to 40 (DKKKRLTGRAKKRQLY) are compositionally biased toward basic residues.

It belongs to the eukaryotic ribosomal protein eS30 family. Component of the small ribosomal subunit. Mature ribosomes consist of a small (40S) and a large (60S) subunit. The 40S subunit contains about 32 different proteins and 1 molecule of RNA (18S). The 60S subunit contains about 42 different proteins and 3 molecules of RNA (28S, 5.8S and 5S).

Its subcellular location is the cytoplasm. Functionally, component of the ribosome, a large ribonucleoprotein complex responsible for the synthesis of proteins in the cell. The small ribosomal subunit (SSU) binds messenger RNAs (mRNAs) and translates the encoded message by selecting cognate aminoacyl-transfer RNA (tRNA) molecules. The large subunit (LSU) contains the ribosomal catalytic site termed the peptidyl transferase center (PTC), which catalyzes the formation of peptide bonds, thereby polymerizing the amino acids delivered by tRNAs into a polypeptide chain. The nascent polypeptides leave the ribosome through a tunnel in the LSU and interact with protein factors that function in enzymatic processing, targeting, and the membrane insertion of nascent chains at the exit of the ribosomal tunnel. This is Small ribosomal subunit protein eS30 from Plasmodium falciparum (isolate 3D7).